Consider the following 1446-residue polypeptide: DNA polymerase III PolC-type (1446 aa).

An Exonuclease domain is found at 425-581 (YVIFDVETTG…ADAESTGYLL (157 aa)).

Belongs to the DNA polymerase type-C family. PolC subfamily.

The protein localises to the cytoplasm. The catalysed reaction is DNA(n) + a 2'-deoxyribonucleoside 5'-triphosphate = DNA(n+1) + diphosphate. Required for replicative DNA synthesis. This DNA polymerase also exhibits 3' to 5' exonuclease activity. The sequence is that of DNA polymerase III PolC-type from Latilactobacillus sakei subsp. sakei (strain 23K) (Lactobacillus sakei subsp. sakei).